We begin with the raw amino-acid sequence, 279 residues long: Energy-coupling factor transporter ATP-binding protein EcfA (279 aa).

One can recognise an ABC transporter domain in the interval Val-4–Arg-239. Gly-37 to Ser-44 lines the ATP pocket.

It belongs to the ABC transporter superfamily. Energy-coupling factor EcfA family. As to quaternary structure, forms a stable energy-coupling factor (ECF) transporter complex composed of 2 membrane-embedded substrate-binding proteins (S component), 2 ATP-binding proteins (A component) and 2 transmembrane proteins (T component).

Its subcellular location is the cell membrane. Its function is as follows. ATP-binding (A) component of a common energy-coupling factor (ECF) ABC-transporter complex. Unlike classic ABC transporters this ECF transporter provides the energy necessary to transport a number of different substrates. This is Energy-coupling factor transporter ATP-binding protein EcfA from Methanocaldococcus jannaschii (strain ATCC 43067 / DSM 2661 / JAL-1 / JCM 10045 / NBRC 100440) (Methanococcus jannaschii).